We begin with the raw amino-acid sequence, 206 residues long: 2,3-bisphosphoglycerate-dependent phosphoglycerate mutase (206 aa).

Residues Arg-9 to Asn-16, Thr-22 to Gly-23, Arg-61, Glu-88 to Tyr-91, Lys-99, Arg-115 to Arg-116, and Gly-159 to Asn-160 contribute to the substrate site. The active-site Tele-phosphohistidine intermediate is the His-10. The active-site Proton donor/acceptor is Glu-88.

It belongs to the phosphoglycerate mutase family. BPG-dependent PGAM subfamily. As to quaternary structure, homodimer.

It catalyses the reaction (2R)-2-phosphoglycerate = (2R)-3-phosphoglycerate. It participates in carbohydrate degradation; glycolysis; pyruvate from D-glyceraldehyde 3-phosphate: step 3/5. Catalyzes the interconversion of 2-phosphoglycerate and 3-phosphoglycerate. This chain is 2,3-bisphosphoglycerate-dependent phosphoglycerate mutase, found in Bartonella bacilliformis (strain ATCC 35685 / KC583 / Herrer 020/F12,63).